The chain runs to 189 residues: Cytidylate kinase (189 aa).

7–15 serves as a coordination point for ATP; the sequence is GPPGSGKTS.

Belongs to the cytidylate kinase family. Type 2 subfamily.

The protein resides in the cytoplasm. It catalyses the reaction CMP + ATP = CDP + ADP. It carries out the reaction dCMP + ATP = dCDP + ADP. This Saccharolobus islandicus (strain Y.N.15.51 / Yellowstone #2) (Sulfolobus islandicus) protein is Cytidylate kinase.